We begin with the raw amino-acid sequence, 182 residues long: UPF0397 protein SPP_0507 (182 aa).

A run of 5 helical transmembrane segments spans residues 10 to 30 (VVAVGIGAALFVVIGMINIPT), 46 to 66 (LLSIIFGPIIGLLVGLIGHAI), 73 to 93 (YGLWWTWIIASGLFGLVVGLF), 109 to 129 (ILIFNLIQLLANALVWGVLAP), and 148 to 168 (IVAGIANGVSVAIAGTLLLLA).

The protein belongs to the UPF0397 family.

Its subcellular location is the cell membrane. This Streptococcus pneumoniae (strain P1031) protein is UPF0397 protein SPP_0507.